The primary structure comprises 181 residues: 3-hydroxyacyl-[acyl-carrier-protein] dehydratase FabZ (181 aa).

Residue His54 is part of the active site.

This sequence belongs to the thioester dehydratase family. FabZ subfamily.

The protein resides in the cytoplasm. It carries out the reaction a (3R)-hydroxyacyl-[ACP] = a (2E)-enoyl-[ACP] + H2O. Involved in unsaturated fatty acids biosynthesis. Catalyzes the dehydration of short chain beta-hydroxyacyl-ACPs and long chain saturated and unsaturated beta-hydroxyacyl-ACPs. This is 3-hydroxyacyl-[acyl-carrier-protein] dehydratase FabZ from Yersinia pestis.